A 358-amino-acid chain; its full sequence is Chitin synthase export chaperone (358 aa).

The next 7 membrane-spanning stretches (helical) occupy residues 49 to 69, 88 to 108, 117 to 137, 159 to 179, 185 to 205, 220 to 240, and 250 to 270; these read IIFQGAASVMHIVALVMTVVM, FFYLYMILTFLSLCIDAGVIP, FVAVQAGLASALVTCLVINGF, FVAFVISFLVGLATFKSWAGL, VGIFVVLYFLNALQLLLYVVM, LGDIAFGLFFFIAGQVILYAF, and HYLDGLFFATTCNLLAVMMVY. Positions 321-358 are disordered; it reads ASGPGTGSGASASGYEGGHHRRESHGYTPSPNRQSLRY. Polar residues predominate over residues 347–358; sequence YTPSPNRQSLRY.

The protein belongs to the CHS7 family. In terms of assembly, interacts with chs-3.

The protein localises to the endoplasmic reticulum membrane. Functionally, chaperone required for the export of the chitin synthase chs-3 from the endoplasmic reticulum. The chain is Chitin synthase export chaperone (csc-1) from Neurospora crassa (strain ATCC 24698 / 74-OR23-1A / CBS 708.71 / DSM 1257 / FGSC 987).